The primary structure comprises 242 residues: ATP synthase subunit a (242 aa).

The next 7 membrane-spanning stretches (helical) occupy residues 23–43 (ISFT…AVLL), 62–82 (VELI…VGGL), 84–104 (YIPF…IGIL), 113–133 (HVSV…VLGF), 143–163 (IFLP…IKLF), 176–196 (LAAN…FVLK), and 201–221 (LAPL…FVAI).

The protein belongs to the ATPase A chain family. As to quaternary structure, F-type ATPases have 2 components, CF(1) - the catalytic core - and CF(0) - the membrane proton channel. CF(1) has five subunits: alpha(3), beta(3), gamma(1), delta(1), epsilon(1). CF(0) has three main subunits: a(1), b(2) and c(9-12). The alpha and beta chains form an alternating ring which encloses part of the gamma chain. CF(1) is attached to CF(0) by a central stalk formed by the gamma and epsilon chains, while a peripheral stalk is formed by the delta and b chains.

The protein localises to the cell inner membrane. Functionally, key component of the proton channel; it plays a direct role in the translocation of protons across the membrane. In Anaplasma phagocytophilum (strain HZ), this protein is ATP synthase subunit a.